A 522-amino-acid chain; its full sequence is Wax ester synthase/diacylglycerol acyltransferase 4 (522 aa).

A compositionally biased stretch (basic and acidic residues) spans 1–12 (MEIETRPHISGD). Positions 1 to 20 (MEIETRPHISGDEKEEEQPL) are disordered. Topologically, residues 1 to 205 (MEIETRPHIS…SDSRLLWLVK (205 aa)) are cytoplasmic. Residue His-149 is the Proton acceptor of the active site. Residues 206-226 (VIWTAVILGLNTVCDALEFIV) traverse the membrane as a helical segment. The Lumenal segment spans residues 227–522 (TTLFVKDTET…QIAGLLYRML (296 aa)). Residues Asn-270 and Asn-409 are each glycosylated (N-linked (GlcNAc...) asparagine).

In the N-terminal section; belongs to the long-chain O-acyltransferase family. In terms of tissue distribution, mostly expressed in roots, flowers and siliques.

Its subcellular location is the cell membrane. It localises to the endoplasmic reticulum membrane. The catalysed reaction is an acyl-CoA + a 1,2-diacyl-sn-glycerol = a triacyl-sn-glycerol + CoA. It catalyses the reaction a long chain fatty alcohol + a fatty acyl-CoA = a wax ester + CoA. It functions in the pathway glycerolipid metabolism; triacylglycerol biosynthesis. It participates in lipid metabolism. In terms of biological role, bifunctional wax ester synthase/diacylglycerol acyltransferase. Involved in cuticular wax biosynthesis. This is Wax ester synthase/diacylglycerol acyltransferase 4 from Arabidopsis thaliana (Mouse-ear cress).